The chain runs to 223 residues: Thymidylate kinase (223 aa).

ATP is bound at residue 7–14 (GIDGAGKS).

This sequence belongs to the thymidylate kinase family.

The catalysed reaction is dTMP + ATP = dTDP + ADP. Phosphorylation of dTMP to form dTDP in both de novo and salvage pathways of dTTP synthesis. The sequence is that of Thymidylate kinase from Prosthecochloris aestuarii (strain DSM 271 / SK 413).